The chain runs to 312 residues: Pre-mRNA-splicing factor 38A (312 aa).

An N-terminal protein interaction domain region spans residues 1-179; sequence MANRTVKDAH…VLEEAEQLEP (179 aa). Phosphoserine is present on residues Ser-11, Ser-193, Ser-194, Ser-209, and Ser-226. A coiled-coil region spans residues 170–204; it reads VLEEAEQLEPRVSALEEDMDDVESSEEEEEEDEKL. Residues 181-312 are disordered; it reads VSALEEDMDD…SHKKSRRGNE (132 aa). Residues 184-202 show a composition bias toward acidic residues; that stretch reads LEEDMDDVESSEEEEEEDE. Basic and acidic residues predominate over residues 203–224; the sequence is KLERVPSPDHRRRSYRDLDKPR. 2 stretches are compositionally biased toward basic residues: residues 225–294 and 301–312; these read RSPT…RSHS and KKSHKKSRRGNE.

Belongs to the PRP38 family. As to quaternary structure, component of the spliceosome B complex. Interacts (via N-terminal interaction domain) with ZMAT2 and MFAP1.

The protein localises to the nucleus. Involved in pre-mRNA splicing as a component of the spliceosome. This chain is Pre-mRNA-splicing factor 38A (PRPF38A), found in Bos taurus (Bovine).